A 310-amino-acid polypeptide reads, in one-letter code: Basic salivary proline-rich protein 4 (310 aa).

Residues 1–16 (MLLILLSVALLALSSA) form the signal peptide. The segment at 14-310 (SSAESSSEDV…RPAQGQQPPQ (297 aa)) is disordered. 9 consecutive repeat copies span residues 35-55 (KPEG…PPPG), 56-76 (KPQG…PPPG), 77-97 (KPEG…PHPG), 98-118 (KPER…PHPG), 119-139 (KPES…PTPG), 140-160 (KPEG…PPPG), 161-181 (KPEG…PHPG), 182-202 (KPER…PPPG), and 203-223 (KPER…PHPG). Positions 35–234 (KPEGRRPQGG…PEGPPPQEGN (200 aa)) are 9.5 X 21 AA tandem repeats of K-P-[EQ]-[GR]-[PR]-[PR]-P-Q-G-G-N-Q-[PS]-[QH]-[RG]-[PT]-P-P-[PH]-P-G. Over residues 48–63 (QRPPPPPGKPQGPPPQ) the composition is skewed to pro residues. 3 N-linked (GlcNAc...) asparagine glycosylation sites follow: asparagine 66, asparagine 87, and asparagine 108. Pro residues predominate over residues 133–147 (GPPPTPGKPEGPPPQ). Residues asparagine 150, asparagine 171, and asparagine 192 are each glycosylated (N-linked (GlcNAc...) asparagine). Over residues 196–210 (RPPPPPGKPERPPPQ) the composition is skewed to pro residues. The N-linked (GlcNAc...) asparagine glycan is linked to asparagine 213. The span at 217-231 (GPPPHPGKPEGPPPQ) shows a compositional bias: pro residues. One copy of the 10; truncated repeat lies at 224–234 (KPEGPPPQEGN). An N-linked (GlcNAc...) asparagine glycan is attached at asparagine 234. The segment covering 258–310 (QGPPPPGKPQGPPPAGGNPQQPQAPPAGKPQGPPPPPQGGRPPRPAQGQQPPQ) has biased composition (pro residues).

In terms of processing, N-glycosylated. Post-translationally, proteolytically cleaved at the tripeptide Xaa-Pro-Gln, where Xaa in the P(3) position is mostly lysine. The endoprotease may be of microbial origin. Pyroglutamate formation found on at least Gln-46, Gln-48, Gln-67, Gln-88; Gln-90; Gln-193; Gln-288 Gln-214 and Gln-295, preferentially in diabetic, and head and neck cancer patients.

It is found in the secreted. This is Basic salivary proline-rich protein 4 (PRB4) from Homo sapiens (Human).